The following is a 247-amino-acid chain: Granzyme B(G,H) (247 aa).

A signal peptide spans methionine 1–alanine 18. Residues glycine 19 to glutamate 20 constitute a propeptide, activation peptide. The region spanning isoleucine 21–lysine 245 is the Peptidase S1 domain. Cysteine 49 and cysteine 65 are oxidised to a cystine. Catalysis depends on histidine 64, which acts as the Charge relay system. Residue asparagine 71 is glycosylated (N-linked (GlcNAc...) asparagine). Aspartate 108 functions as the Charge relay system in the catalytic mechanism. Cystine bridges form between cysteine 142-cysteine 209 and cysteine 173-cysteine 188. Asparagine 182 carries N-linked (GlcNAc...) asparagine glycosylation. The active-site Charge relay system is serine 203.

The protein belongs to the peptidase S1 family. Granzyme subfamily.

It localises to the secreted. The protein localises to the cytolytic granule. The catalysed reaction is Preferential cleavage: -Asp-|-Xaa- &gt;&gt; -Asn-|-Xaa- &gt; -Met-|-Xaa-, -Ser-|-Xaa-.. Its activity is regulated as follows. Inactivated by the serine protease inhibitor diisopropylfluorophosphate. In terms of biological role, abundant protease in the cytosolic granules of cytotoxic T-cells and NK-cells which activates caspase-independent pyroptosis when delivered into the target cell through the immunological synapse. It cleaves after Asp. Once delivered into the target cell, acts by catalyzing cleavage of gasdermin-E (GSDME), releasing the pore-forming moiety of GSDME, thereby triggering pyroptosis and target cell death. Seems to be linked to an activation cascade of caspases (aspartate-specific cysteine proteases) responsible for apoptosis execution. Cleaves caspase-3 and -9 (CASP3 and CASP9, respectively) to give rise to active enzymes mediating apoptosis. Cleaves and activates CASP7 in response to bacterial infection, promoting plasma membrane repair. This Mus musculus (Mouse) protein is Granzyme B(G,H) (Gzmb).